The primary structure comprises 887 residues: Phosphatidylinositol 3-kinase catalytic subunit type 3 (887 aa).

A C2 PI3K-type domain is found at 35 to 184 (YKAVLEDPML…LAKLTKAHRQ (150 aa)). The tract at residues 149–170 (VEADGSEPTKTPGRTSSTLSED) is disordered. The span at 156 to 170 (PTKTPGRTSSTLSED) shows a compositional bias: polar residues. Threonine 163 carries the post-translational modification Phosphothreonine; by AMPK. Serine 165 is modified (phosphoserine; by AMPK). Residues serine 244, serine 261, and serine 282 each carry the phosphoserine modification. In terms of domain architecture, PIK helical spans 283 to 520 (DHDLKPNAAT…PKTHEMYLNV (238 aa)). Residues 447-467 (TSPLPSVSSPPPASKTKEVPD) form a disordered region. In terms of domain architecture, PI3K/PI4K catalytic spans 605–871 (IPETATLFKS…LIDESVHALF (267 aa)). A G-loop region spans residues 611-617 (LFKSALM). The interval 740–748 (GVGDRHLDN) is catalytic loop. The interval 759–780 (HIDFGYILGRDPKPLPPPMKLN) is activation loop.

Belongs to the PI3/PI4-kinase family. Component of the PI3K (PI3KC3/PI3K-III/class III phosphatidylinositol 3-kinase) complex the core of which is composed of the catalytic subunit PIK3C3, the regulatory subunit PIK3R4 and BECN1 associating with additional regulatory/auxiliary subunits to form alternative complex forms. Alternative complex forms containing a fourth regulatory subunit in a mutually exclusive manner are: the PI3K complex I (PI3KC3-C1) containing ATG14, and the PI3K complex II (PI3KC3-C2) containing UVRAG. PI3KC3-C1 displays a V-shaped architecture with PIK3R4 serving as a bridge between PIK3C3 and the ATG14:BECN1 subcomplex. Both, PI3KC3-C1 and PI3KC3-C2, can associate with further regulatory subunits such as RUBCN, SH3GLB1/Bif-1 and AMBRA1. PI3KC3-C1 probably associates with PIK3CB. Interacts with RAB7A in the presence of PIK3R4. Interacts with AMBRA1. Interacts with BECN1P1/BECN2. Interacts with SLAMF1. May be a component of a complex composed of RAB5A (in GDP-bound form), DYN2 and PIK3C3. Interacts with NCKAP1L. Interacts with ATG14; this interaction is increased in the absence of TMEM39A. Interacts with STEEP1; the interaction is STING1-dependent and required for trafficking of STING1 from the endoplasmic reticulum. Interacts with YWHAG. Interacts with ARMC3. Mn(2+) is required as a cofactor. In terms of processing, ubiquitinated via 'Lys-29'- and 'Lys-48'-linked ubiquitination by UBE3C, promoting its degradation. Deubiquitination by ZRANB1/TRABID promotes its stabilization, leading to autophagosome maturation. Ubiquitously expressed, with a highest expression in skeletal muscle.

Its subcellular location is the midbody. The protein resides in the late endosome. The protein localises to the cytoplasmic vesicle. It is found in the autophagosome. The enzyme catalyses a 1,2-diacyl-sn-glycero-3-phospho-(1D-myo-inositol) + ATP = a 1,2-diacyl-sn-glycero-3-phospho-(1D-myo-inositol-3-phosphate) + ADP + H(+). In terms of biological role, catalytic subunit of the PI3K complex that mediates formation of phosphatidylinositol 3-phosphate; different complex forms are believed to play a role in multiple membrane trafficking pathways: PI3KC3-C1 is involved in initiation of autophagosomes and PI3KC3-C2 in maturation of autophagosomes and endocytosis. As part of PI3KC3-C1, promotes endoplasmic reticulum membrane curvature formation prior to vesicle budding. Involved in regulation of degradative endocytic trafficking and required for the abscission step in cytokinesis, probably in the context of PI3KC3-C2. Involved in the transport of lysosomal enzyme precursors to lysosomes. Required for transport from early to late endosomes. Functionally, (Microbial infection) Kinase activity is required for SARS coronavirus-2/SARS-CoV-2 replication. This Homo sapiens (Human) protein is Phosphatidylinositol 3-kinase catalytic subunit type 3.